The following is a 268-amino-acid chain: Helix-loop-helix protein 6 (268 aa).

Over residues 117–130 (QSQVQPQLPTQSQP) the composition is skewed to low complexity. Positions 117–140 (QSQVQPQLPTQSQPKPSSKASLDT) are disordered. The span at 131–140 (KPSSKASLDT) shows a compositional bias: polar residues. Residues 173 to 225 (SSVWKRNERERCRVRNVNDGYERLRKHLPVHFDEKRISKVDTLRLAIRYIKHL) enclose the bHLH domain.

In terms of tissue distribution, expressed in the gland cells of the pharynx and weakly in the pharyngeal neuron.

It is found in the nucleus. Its function is as follows. Transcription factor that regulates the development of the g2 pharyngeal gland cells and pharyngeal gland function and thereby is required for feeding. Required for the expression of a number of genes in the pharyngeal gland, possibly by binding to the E box motif (5'-CANNTG-3') in the promoter region of these genes. Positively regulates the expression of genes encoding mucin-like proteins, which lubricate the pharyngeal tract to ensure efficient passage of the bacterial food source. Exhibits pharyngeal gland-specific positive autoregulation activity. In Caenorhabditis elegans, this protein is Helix-loop-helix protein 6 (hlh-6).